Here is a 219-residue protein sequence, read N- to C-terminus: Ran-binding protein 1 homolog c (219 aa).

Positions 1-11 (MASTEPERENR) are enriched in basic and acidic residues. 2 disordered regions span residues 1-30 (MASTEPERENREDETEVNEDEDTGAQVAPI) and 160-219 (QVGK…EAST). Residues 12–23 (EDETEVNEDEDT) are compositionally biased toward acidic residues. A RanBD1 domain is found at 26–161 (QVAPIVRLEE…FTEIAESQQV (136 aa)). Residues 185–219 (SEEKAKEAEEKEPAKEDKETKKEKVEEEKKTEAST) are compositionally biased toward basic and acidic residues.

The protein resides in the nucleus. It localises to the nuclear pore complex. In Arabidopsis thaliana (Mouse-ear cress), this protein is Ran-binding protein 1 homolog c (RANBP1C).